The sequence spans 43 residues: Protein PsbN (43 aa).

The helical transmembrane segment at 3–23 (IATLVAIFISGLLVSFTGYAL) threads the bilayer.

This sequence belongs to the PsbN family.

The protein resides in the plastid. It is found in the chloroplast thylakoid membrane. Its function is as follows. May play a role in photosystem I and II biogenesis. The sequence is that of Protein PsbN from Euonymus alatus (Burning bush).